The following is a 506-amino-acid chain: Nucleosome assembly protein 1-like 3 (506 aa).

Disordered stretches follow at residues 1–95 (MAEA…LGTN) and 157–307 (PTEE…KRED). The span at 35–70 (SSSSSSSTSDSSSSSSTSGSSSGSGSSSSSSGSTSS) shows a compositional bias: low complexity. The span at 157–178 (PTEEECEWNSEDEEFSSDEEVQ) shows a compositional bias: acidic residues. Over residues 196-296 (PKENPEVKAE…ERLQDSVDLK (101 aa)) the composition is skewed to basic and acidic residues.

Belongs to the nucleosome assembly protein (NAP) family.

It localises to the nucleus. The protein is Nucleosome assembly protein 1-like 3 (NAP1L3) of Homo sapiens (Human).